The following is a 275-amino-acid chain: Large ribosomal subunit protein uL2 (275 aa).

2 disordered regions span residues 24–48 (LTTD…NAGD) and 224–264 (VMNP…NKRT). Positions 31-42 (KPLTKTKQRTGG) are enriched in basic residues.

Belongs to the universal ribosomal protein uL2 family. Part of the 50S ribosomal subunit. Forms a bridge to the 30S subunit in the 70S ribosome.

Functionally, one of the primary rRNA binding proteins. Required for association of the 30S and 50S subunits to form the 70S ribosome, for tRNA binding and peptide bond formation. It has been suggested to have peptidyltransferase activity; this is somewhat controversial. Makes several contacts with the 16S rRNA in the 70S ribosome. In Koribacter versatilis (strain Ellin345), this protein is Large ribosomal subunit protein uL2.